Reading from the N-terminus, the 267-residue chain is Undecaprenyl-diphosphatase (267 aa).

7 consecutive transmembrane segments (helical) span residues 7–29 (LILG…HMIL), 41–61 (FWKS…IFVF), 69–89 (LDIW…GLFV), 96–116 (LFNG…FILI), 173–193 (AAEF…AYSI), 207–227 (IPLG…IKFF), and 239–259 (FGIY…SGIL).

This sequence belongs to the UppP family.

Its subcellular location is the cell inner membrane. It carries out the reaction di-trans,octa-cis-undecaprenyl diphosphate + H2O = di-trans,octa-cis-undecaprenyl phosphate + phosphate + H(+). Functionally, catalyzes the dephosphorylation of undecaprenyl diphosphate (UPP). Confers resistance to bacitracin. This Campylobacter jejuni subsp. jejuni serotype O:6 (strain 81116 / NCTC 11828) protein is Undecaprenyl-diphosphatase.